The chain runs to 808 residues: DNA replication licensing factor MCM3 (808 aa).

N-acetylalanine is present on alanine 2. 2 positions are modified to phosphoserine: serine 160 and serine 275. Lysine 293 carries the N6-acetyllysine modification. The MCM domain occupies 295–502; it reads IFDQLARSLA…QDREISDHVL (208 aa). The ADP site is built by glutamine 353, leucine 393, glutamate 394, alanine 395, and alanine 397. The Arginine finger signature appears at 477 to 480; it reads SRFD. Alanine 523 serves as a coordination point for ATP. Residue serine 535 is modified to Phosphoserine; by ATM. Residue lysine 547 is modified to N6-acetyllysine. Serine 611 is modified (phosphoserine). The disordered stretch occupies residues 662–738; it reads KKRKKRSEDE…QETKESQKVE (77 aa). ATP is bound at residue arginine 664. Phosphoserine occurs at positions 668 and 672. 2 stretches are compositionally biased toward acidic residues: residues 670–681 and 704–717; these read DESETEDEEEKS and SYDP…EEEM. At threonine 674 the chain carries Phosphothreonine. Serine 681 carries the post-translational modification Phosphoserine. A Phosphotyrosine modification is found at tyrosine 708. Serine 711 is subject to Phosphoserine. A phosphothreonine mark is found at threonine 713, threonine 722, and threonine 725. The segment covering 727–738 has biased composition (basic and acidic residues); that stretch reads DSQETKESQKVE. Phosphoserine occurs at positions 728 and 734.

Belongs to the MCM family. As to quaternary structure, component of the MCM2-7 complex. The complex forms a toroidal hexameric ring with the proposed subunit order MCM2-MCM6-MCM4-MCM7-MCM3-MCM5. Component of the CMG helicase complex, a hexameric ring of related MCM2-7 subunits stabilized by CDC45 and the tetrameric GINS complex. Associated with the replication-specific DNA polymerase alpha. Interacts with MCMBP. Interacts with ANKRD17. Interacts with MCM3AP isoform MCM3AP; this interaction leads to MCM3 acetylation. Post-translationally, acetylated by MCM3AP. O-glycosylated (O-GlcNAcylated), in a cell cycle-dependent manner.

Its subcellular location is the nucleus. The protein localises to the chromosome. The catalysed reaction is ATP + H2O = ADP + phosphate + H(+). In terms of biological role, acts as a component of the MCM2-7 complex (MCM complex) which is the replicative helicase essential for 'once per cell cycle' DNA replication initiation and elongation in eukaryotic cells. Core component of CDC45-MCM-GINS (CMG) helicase, the molecular machine that unwinds template DNA during replication, and around which the replisome is built. The active ATPase sites in the MCM2-7 ring are formed through the interaction surfaces of two neighboring subunits such that a critical structure of a conserved arginine finger motif is provided in trans relative to the ATP-binding site of the Walker A box of the adjacent subunit. The six ATPase active sites, however, are likely to contribute differentially to the complex helicase activity. Required for the entry in S phase and for cell division. This chain is DNA replication licensing factor MCM3 (MCM3), found in Pongo abelii (Sumatran orangutan).